The chain runs to 842 residues: Leucine--tRNA ligase (842 aa).

The short motif at 44-55 (PYPSANGLHVGH) is the 'HIGH' region element. A 'KMSKS' region motif is present at residues 619 to 623 (KMSKS). Position 622 (Lys622) interacts with ATP.

The protein belongs to the class-I aminoacyl-tRNA synthetase family.

The protein resides in the cytoplasm. The catalysed reaction is tRNA(Leu) + L-leucine + ATP = L-leucyl-tRNA(Leu) + AMP + diphosphate. This Borrelia turicatae (strain 91E135) protein is Leucine--tRNA ligase.